A 1140-amino-acid chain; its full sequence is Calcium-activated potassium channel slo-1 (1140 aa).

Residues 1–44 (MGEIYSPSQSKGFNQPYGYPMNCNLSRVFMEMTEEDRKCLEERK) are Extracellular-facing. Residues 45–65 (YWCFLLSSITTFCASMILVVI) traverse the membrane as a helical segment. The Cytoplasmic segment spans residues 66 to 139 (WRVVTHLCCQ…LISGQSLTGR (74 aa)). Residues 140–161 (FLVLLVFILSIGSLIIYFYDAS) traverse the membrane as a helical segment. Topologically, residues 162 to 178 (FQNFQVETCIPWQDSPS) are extracellular. Residues 179 to 199 (QQIDLGFNIFFLVYFFIRFIA) traverse the membrane as a helical segment. Topologically, residues 200-203 (ASDK) are cytoplasmic. A helical membrane pass occupies residues 204–224 (VWFLLEMYSWIDFFTIPPSFV). The Extracellular portion of the chain corresponds to 225–228 (AIYL). A helical; Voltage-sensor membrane pass occupies residues 229–249 (QRNWLGFRFLRALRLMTVPDI). The Cytoplasmic portion of the chain corresponds to 250–264 (LQYLNILKTSSSIRL). A helical membrane pass occupies residues 265-285 (TQLVTIFVAVCLTGAGLVHLL). Residues 286–299 (ENSGDFFKGFINPH) are Extracellular-facing. Positions 300–322 (RITYADSVYFVLVTMSTVGYGDI) form an intramembrane region, pore-forming. A Selectivity for potassium motif is present at residues 316–319 (TVGY). Residues 323-331 (YCTTLCGRL) are Extracellular-facing. A helical membrane pass occupies residues 332–352 (FMIFFILFGLAMFASYVPEIA). Residues 353–1140 (DLIGNRQKYG…LEYEPGKRHF (788 aa)) are Cytoplasmic-facing. The RCK N-terminal 1 domain maps to 371–514 (KKHIVVCGHI…DWKRGDDVIC (144 aa)). The segment S7 stretch occupies residues 520 to 540 (LGFIAQSCLAPGFSTMMANLF). A segment S8 region spans residues 578-598 (MTFPEAVDLLFNRLGLLLLAI). The segment at 797-817 (VLNGHVVVCLFADQDSPLIGL) is segment S9. The RCK N-terminal 2 domain maps to 799–953 (NGHVVVCLFA…GAKFGTNVPM (155 aa)). Positions 955–977 (TELVNDSNVQFLDQDDDDDPDTE) match the Calcium bowl motif. The Ca(2+) site is built by glutamine 964, aspartate 967, aspartate 970, and aspartate 972. Positions 984–1004 (FACGTAFAISVLDSLMSTTYF) are segment S10.

Belongs to the potassium channel family. Calcium-activated (TC 1.A.1.3) subfamily. Slo sub-subfamily. Homotetramer; which constitutes the calcium-activated potassium channel. In terms of processing, phosphorylated. Expressed in synaptic regions of the nervous system including in both the nerve ring and nerve cords, as well as in the body-wall and vulval muscle. Expressed broadly in motor neurons. Forms puncta at presynaptic terminals of neurons, muscle excitation sites, and in the dorsal nerve cord.

Its subcellular location is the cell membrane. It is found in the synapse. Potassium channel activated by both membrane depolarization or increase in cytosolic Ca(2+) that mediates export of K(+). Its activation dampens the excitatory events that elevate the cytosolic Ca(2+) concentration and/or depolarize the cell membrane. It therefore contributes to repolarization of the membrane potential. Essential for the regulation of neurotransmitter release at synapses. Regulates longevity and age-associated decline in motor activity in mid-late life, by acting in motor neurons and through daf-16 in the intestine. When clustered in neurons, mediates ethanol-induced suppression of locomotory and egg-laying behaviors. The sequence is that of Calcium-activated potassium channel slo-1 from Caenorhabditis elegans.